Reading from the N-terminus, the 24-residue chain is Unknown protein 3 (24 aa).

This Pseudotsuga menziesii (Douglas-fir) protein is Unknown protein 3.